A 342-amino-acid polypeptide reads, in one-letter code: Phosphoribosylformylglycinamidine cyclo-ligase (342 aa).

The protein belongs to the AIR synthase family.

The protein resides in the cytoplasm. It carries out the reaction 2-formamido-N(1)-(5-O-phospho-beta-D-ribosyl)acetamidine + ATP = 5-amino-1-(5-phospho-beta-D-ribosyl)imidazole + ADP + phosphate + H(+). It functions in the pathway purine metabolism; IMP biosynthesis via de novo pathway; 5-amino-1-(5-phospho-D-ribosyl)imidazole from N(2)-formyl-N(1)-(5-phospho-D-ribosyl)glycinamide: step 2/2. In Staphylococcus saprophyticus subsp. saprophyticus (strain ATCC 15305 / DSM 20229 / NCIMB 8711 / NCTC 7292 / S-41), this protein is Phosphoribosylformylglycinamidine cyclo-ligase.